Consider the following 147-residue polypeptide: Large ribosomal subunit protein uL22 (147 aa).

Residues 110-147 (EEKKTVAKKAPAAKKTTTTKAPAKKTTSTKKATAKKES) form a disordered region. A compositionally biased stretch (low complexity) spans 117-140 (KKAPAAKKTTTTKAPAKKTTSTKK).

It belongs to the universal ribosomal protein uL22 family. In terms of assembly, part of the 50S ribosomal subunit.

This protein binds specifically to 23S rRNA; its binding is stimulated by other ribosomal proteins, e.g. L4, L17, and L20. It is important during the early stages of 50S assembly. It makes multiple contacts with different domains of the 23S rRNA in the assembled 50S subunit and ribosome. In terms of biological role, the globular domain of the protein is located near the polypeptide exit tunnel on the outside of the subunit, while an extended beta-hairpin is found that lines the wall of the exit tunnel in the center of the 70S ribosome. This chain is Large ribosomal subunit protein uL22, found in Campylobacter jejuni subsp. jejuni serotype O:23/36 (strain 81-176).